The sequence spans 315 residues: Heme oxygenase 2 (315 aa).

Residues 1 to 12 (MSSEVETSEGVD) are compositionally biased toward acidic residues. Positions 1–28 (MSSEVETSEGVDESEKNSMAPEKENHTK) are disordered. The residue at position 2 (Ser2) is an N-acetylserine. Residue Ser2 is modified to Phosphoserine. Residues 2–294 (SSEVETSEGV…TTVAVLRKPS (293 aa)) lie on the Cytoplasmic side of the membrane. The span at 13-28 (ESEKNSMAPEKENHTK) shows a compositional bias: basic and acidic residues. 4 residues coordinate heme b: His44, Tyr153, Lys198, and Arg202. 2 HRM repeats span residues 263 to 268 (KCPFYA) and 280 to 285 (NCPFQT). Cys264 and Cys281 each carry S-nitrosocysteine. A helical; Anchor for type IV membrane protein membrane pass occupies residues 295–315 (LQLILAASVALVAGLLAWYYM).

Belongs to the heme oxygenase family. In terms of processing, a soluble form arises by proteolytic removal of the membrane anchor. S-nitrosylated by BLVRB. Ubiquitous.

It localises to the microsome membrane. It is found in the endoplasmic reticulum membrane. It catalyses the reaction heme b + 3 reduced [NADPH--hemoprotein reductase] + 3 O2 = biliverdin IXalpha + CO + Fe(2+) + 3 oxidized [NADPH--hemoprotein reductase] + 3 H2O + H(+). Functionally, catalyzes the oxidative cleavage of heme at the alpha-methene bridge carbon, released as carbon monoxide (CO), to generate biliverdin IXalpha, while releasing the central heme iron chelate as ferrous iron. The sequence is that of Heme oxygenase 2 (Hmox2) from Mus musculus (Mouse).